We begin with the raw amino-acid sequence, 361 residues long: POU domain, class 3, transcription factor 4 (361 aa).

Disordered regions lie at residues 99–131 (PHVA…GQPL) and 144–192 (MLEH…PTSD). The span at 119–131 (APNSSITSSGQPL) shows a compositional bias: polar residues. Residues 165 to 183 (VLREPPDHGELGSHHCQDH) are compositionally biased toward basic and acidic residues. Positions 186–260 (EETPTSDELE…LLNKWLEEAD (75 aa)) constitute a POU-specific domain. Serine 265 carries the phosphoserine modification. The segment at residues 278–337 (KRKKRTSIEVSVKGVLETHFLKCPKPAAQEISSLADSLQLEKEVVRVWFCNRRQKEKRMT) is a DNA-binding region (homeobox). Residues 334–361 (KRMTPPGDQQPHEVYSHTVKTDASCHDL) are disordered. Basic and acidic residues predominate over residues 343-361 (QPHEVYSHTVKTDASCHDL).

Belongs to the POU transcription factor family. Class-3 subfamily. Interacts with HNRNPU. In terms of tissue distribution, brain specific.

The protein localises to the nucleus. Probable transcription factor which exert its primary action widely during early neural development and in a very limited set of neurons in the mature brain. The polypeptide is POU domain, class 3, transcription factor 4 (Pou3f4) (Mus musculus (Mouse)).